Here is a 592-residue protein sequence, read N- to C-terminus: Endoribonuclease Arlr (592 aa).

The signal sequence occupies residues 1 to 24 (MRCLALSAVFLCLTLAGHFHLSDA). The interval 83–329 (PTAANKPPPL…FQSSGNSVAT (247 aa)) is disordered. The segment covering 109-120 (PGSSPFGASQNP) has biased composition (polar residues). Composition is skewed to low complexity over residues 134–144 (PSHPSQPSQPS) and 188–209 (GISSTTSTTTTAKPITSTTGKT). Composition is skewed to pro residues over residues 234–249 (LPAPKTPPGSPTPTPG) and 258–267 (LPTPQHPVHP). The segment covering 268–294 (PTKATSAATPTPTPTPSFSSSVTPTPA) has biased composition (low complexity). The region spanning 329–592 (TDDEIRQLTE…NLIGSAYPEI (264 aa)) is the EndoU domain. Catalysis depends on residues H473, H488, and K531.

It belongs to the ENDOU family. In terms of assembly, monomer. Requires Mn(2+) as cofactor. Predominantly expressed in head. Expressed in fat body cells.

The protein resides in the endoplasmic reticulum lumen. It localises to the secreted. It carries out the reaction a ribonucleotidyl-ribonucleotide-RNA + H2O = a 3'-end 3'-phospho-ribonucleotide-RNA + a 5'-end dephospho-ribonucleoside-RNA + H(+). Functionally, endoribonuclease that cleaves single-stranded RNAs; unlike its paralog EndoU it does not appear to preferentially cleave at uridylates and releases linear products instead of products that have 2'-3'-cyclic phosphate termini. Preferentially cleaves single stranded RNA at sites with AU, UC and poly-U sites cleaved less efficiently. Targets mRNAs encoding proteins involved in lipid metabolism, particularly those involved in lipolysis, to regulate their expression. The polypeptide is Endoribonuclease Arlr (Drosophila melanogaster (Fruit fly)).